The chain runs to 424 residues: Cyclin-dependent kinase D-1 (424 aa).

The Protein kinase domain maps to 19-299; sequence YLKREVLGEG…AQQALEHRYF (281 aa). ATP contacts are provided by residues 25-33 and Lys-48; that span reads LGEGTYGVV. A Phosphothreonine modification is found at Thr-29. Tyr-30 carries the phosphotyrosine modification. The active-site Proton acceptor is Asp-141. Ser-168 is subject to Phosphoserine. At Thr-174 the chain carries Phosphothreonine. 2 disordered regions span residues 303–337 and 359–424; these read PAPTKPSQLPRPPPKGDSGNNKIPDLNLQDGPVVL and ADRT…GYTE. Residues 359–374 are compositionally biased toward basic and acidic residues; the sequence is ADRTEEHPSGARHMDD.

Belongs to the protein kinase superfamily. CMGC Ser/Thr protein kinase family. CDC2/CDKX subfamily. As to quaternary structure, interacts with CYCH1-1. As to expression, expressed in actively dividing cells of roots, leaves and shoots. Expressed in the intercalary meristem and the elongation zone of internodes.

It localises to the nucleus. It catalyses the reaction L-seryl-[protein] + ATP = O-phospho-L-seryl-[protein] + ADP + H(+). The catalysed reaction is L-threonyl-[protein] + ATP = O-phospho-L-threonyl-[protein] + ADP + H(+). The enzyme catalyses [DNA-directed RNA polymerase] + ATP = phospho-[DNA-directed RNA polymerase] + ADP + H(+). Its function is as follows. CDK-activating kinase that may control G1/S phase progression. May control the rate of cell differentiation to accomplish proper development of organs, or in response to a changing environment. Forms a complex with cyclin CYCH1-1 that phosphorylates CDKA-1 and the C-terminal domain (CTD) of the large subunit of RNA polymerase II. This chain is Cyclin-dependent kinase D-1 (CDKD-1), found in Oryza sativa subsp. japonica (Rice).